The sequence spans 232 residues: DOA4-independent degradation protein 4 (232 aa).

Residues 14–97 (PQERLKKNQR…AISLRIQAVR (84 aa)) adopt a coiled-coil conformation. The interval 183 to 232 (LQSTPQNLVSNAPIAETAMGIPEPIGAGSEFHGNPDDDLQARLNTLKKQT) is interaction with VPS4. The disordered stretch occupies residues 203-232 (IPEPIGAGSEFHGNPDDDLQARLNTLKKQT). The MIT-interacting motif signature appears at 219 to 229 (DDLQARLNTLK).

Belongs to the SNF7 family. As to quaternary structure, core component of the ESCRT-III complex (endosomal sorting required for transport complex III). ESCRT-III appears to be sequentially assembled as a flat lattice on the endosome membrane and forms a transient 450 kDa complex that contains DID4, oligomerized SNF7, VPS20 and VPS24. SNF7 oligomerization into a membrane-associated filament is nucleated by association of SNF7 with VPS20; the process is terminated through association of VPS24, possibly by capping the SNF7 filament. VPS24 subsequently associates with DID4/VPS2.

It localises to the cytoplasm. It is found in the endosome membrane. Functionally, required for the sorting and concentration of proteins resulting in the entry of these proteins into the invaginating vesicles of the multivesicular body (MVB). Acts a component of the ESCRT-III complex, which appears to be critical for late steps in MVB sorting, such as membrane invagination and final cargo sorting and recruitment of late-acting components of the sorting machinery. The MVB pathway requires the sequential function of ESCRT-O, -I,-II and -III complex assemblies. Can directly stimulate VPS4 ATPase activity. The DID4/VPS2-VPS24 subcomplex is required for the VPS4-dependent dissociation of ESCRT-III. In Saccharomyces cerevisiae (strain ATCC 204508 / S288c) (Baker's yeast), this protein is DOA4-independent degradation protein 4 (DID4).